Consider the following 224-residue polypeptide: Ribonuclease T (224 aa).

The Exonuclease domain occupies 20 to 195 (VVIDVETAGF…YDTQKTAELF (176 aa)). Residues Asp23, Glu25, His182, and Asp187 each contribute to the Mg(2+) site. His182 functions as the Proton donor/acceptor in the catalytic mechanism.

This sequence belongs to the RNase T family. As to quaternary structure, homodimer. The cofactor is Mg(2+).

In terms of biological role, trims short 3' overhangs of a variety of RNA species, leaving a one or two nucleotide 3' overhang. Responsible for the end-turnover of tRNA: specifically removes the terminal AMP residue from uncharged tRNA (tRNA-C-C-A). Also appears to be involved in tRNA biosynthesis. In Vibrio cholerae serotype O1 (strain ATCC 39315 / El Tor Inaba N16961), this protein is Ribonuclease T.